Consider the following 231-residue polypeptide: Uridylate kinase (231 aa).

Lys-6 to Gly-9 contacts ATP. The tract at residues Gly-14–Gly-19 is involved in allosteric activation by GTP. ATP is bound by residues Gly-49 and Arg-53. UMP contacts are provided by residues Asp-66 and Thr-127–Thr-134. ATP-binding residues include Thr-154, Tyr-160, and Asp-163.

Belongs to the UMP kinase family. Homohexamer.

It is found in the cytoplasm. The enzyme catalyses UMP + ATP = UDP + ADP. It functions in the pathway pyrimidine metabolism; CTP biosynthesis via de novo pathway; UDP from UMP (UMPK route): step 1/1. With respect to regulation, allosterically activated by GTP. Inhibited by UTP. Its function is as follows. Catalyzes the reversible phosphorylation of UMP to UDP. The chain is Uridylate kinase from Thermotoga petrophila (strain ATCC BAA-488 / DSM 13995 / JCM 10881 / RKU-1).